Here is a 150-residue protein sequence, read N- to C-terminus: SsrA-binding protein (150 aa).

The protein belongs to the SmpB family.

The protein localises to the cytoplasm. Required for rescue of stalled ribosomes mediated by trans-translation. Binds to transfer-messenger RNA (tmRNA), required for stable association of tmRNA with ribosomes. tmRNA and SmpB together mimic tRNA shape, replacing the anticodon stem-loop with SmpB. tmRNA is encoded by the ssrA gene; the 2 termini fold to resemble tRNA(Ala) and it encodes a 'tag peptide', a short internal open reading frame. During trans-translation Ala-aminoacylated tmRNA acts like a tRNA, entering the A-site of stalled ribosomes, displacing the stalled mRNA. The ribosome then switches to translate the ORF on the tmRNA; the nascent peptide is terminated with the 'tag peptide' encoded by the tmRNA and targeted for degradation. The ribosome is freed to recommence translation, which seems to be the essential function of trans-translation. This Borrelia garinii subsp. bavariensis (strain ATCC BAA-2496 / DSM 23469 / PBi) (Borreliella bavariensis) protein is SsrA-binding protein.